The primary structure comprises 1021 residues: Ubiquitin-activating enzyme E1 1 (1021 aa).

The ATP site is built by arginine 22, alanine 442, and aspartate 468. Aspartate 470 contributes to the Mg(2+) binding site. Residues arginine 479, lysine 492, valine 518, and 542–543 (DN) contribute to the ATP site. Mg(2+) is bound at residue aspartate 542. Catalysis depends on cysteine 598, which acts as the Glycyl thioester intermediate.

The protein belongs to the ubiquitin-activating E1 family. Monomer.

It is found in the cytoplasm. The protein localises to the nucleus. The enzyme catalyses ATP + ubiquitin + [E1 ubiquitin-activating enzyme]-L-cysteine = AMP + diphosphate + S-ubiquitinyl-[E1 ubiquitin-activating enzyme]-L-cysteine.. Its pathway is protein modification; protein ubiquitination. Functionally, E1 ubiquitin-activating enzyme that catalyzes the first step in ubiquitin conjugation to mark cellular proteins for degradation through the ubiquitin-proteasome system. Activates ubiquitin by first adenylating its C-terminal glycine residue with ATP, and thereafter linking this residue to the side chain of a cysteine residue in E1, yielding a ubiquitin-E1 thioester and free AMP. The protein is Ubiquitin-activating enzyme E1 1 (UBA1) of Candida albicans (strain WO-1) (Yeast).